The sequence spans 515 residues: Maturase K (515 aa).

Belongs to the intron maturase 2 family. MatK subfamily.

It is found in the plastid. Its subcellular location is the chloroplast. Usually encoded in the trnK tRNA gene intron. Probably assists in splicing its own and other chloroplast group II introns. This chain is Maturase K, found in Picea mariana (Black spruce).